Consider the following 299-residue polypeptide: Sulfate adenylyltransferase subunit 2 (299 aa).

Belongs to the PAPS reductase family. CysD subfamily. As to quaternary structure, sulfate-activating enzymes, NodP and NodQ, may be physically associated.

It carries out the reaction sulfate + ATP + H(+) = adenosine 5'-phosphosulfate + diphosphate. Functionally, proposed to provide activated sulfate for transfer to nod factor. This is Sulfate adenylyltransferase subunit 2 (nodP) from Rhizobium tropici.